The sequence spans 651 residues: Probable potassium transport system protein Kup (651 aa).

Transmembrane regions (helical) follow at residues 41 to 61 (LVLG…IYAF), 82 to 102 (VVSL…VLFV), 130 to 150 (LILG…VITP), 163 to 183 (IVAP…LVTL), 194 to 214 (VAIV…ASGL), 235 to 255 (FLTV…LAMT), 276 to 296 (WLWI…AFIL), 309 to 329 (MIPS…TVIA), 366 to 386 (IYIP…VLGF), 395 to 415 (AYGI…YIVM), 426 to 446 (ALPI…ANII), and 450 to 470 (EGGW…WTWV).

This sequence belongs to the HAK/KUP transporter (TC 2.A.72) family.

It localises to the cell inner membrane. It carries out the reaction K(+)(in) + H(+)(in) = K(+)(out) + H(+)(out). In terms of biological role, transport of potassium into the cell. Likely operates as a K(+):H(+) symporter. This is Probable potassium transport system protein Kup from Brucella canis (strain ATCC 23365 / NCTC 10854 / RM-666).